A 353-amino-acid polypeptide reads, in one-letter code: MSEIFDVNAAIYPFPARPVPLDTNEKAFYREKIKTLLKQRDAVLVAHYYTDPEIQALAEETGGCVADSLEMARFGNNHPASTLLVAGVRFMGETAKILNPEKKVLMPTLNAECSLDLGCPVDEFTAFCDSHPDRTVVVYANTSAAVKAKADWVVTSSIAVELIEHLDSLGEKIIWAPDRHLGSYVQKKSGADVLCWQGACIVHDEFKTQALARMKALYPDAAVLVHPESPQAVVDMADAVGSTSQLIQAAKTLPQKTLIVATDRGIFYKMQQACPDKELFEAPTAGEGATCRSCAHCPWMAMNGLRAIAEGLEQGGVMHKIHVDEELRQQALIPLNRMLDFANQLKLQVKGNA.

2 residues coordinate iminosuccinate: H47 and S68. C113 is a [4Fe-4S] cluster binding site. Residues 139 to 141 (YAN) and S156 contribute to the iminosuccinate site. C200 lines the [4Fe-4S] cluster pocket. Residues 226 to 228 (HPE) and T243 contribute to the iminosuccinate site. [4Fe-4S] cluster is bound at residue C297.

This sequence belongs to the quinolinate synthase family. Type 1 subfamily. [4Fe-4S] cluster is required as a cofactor.

It is found in the cytoplasm. It catalyses the reaction iminosuccinate + dihydroxyacetone phosphate = quinolinate + phosphate + 2 H2O + H(+). It participates in cofactor biosynthesis; NAD(+) biosynthesis; quinolinate from iminoaspartate: step 1/1. Catalyzes the condensation of iminoaspartate with dihydroxyacetone phosphate to form quinolinate. The sequence is that of Quinolinate synthase from Yersinia pseudotuberculosis serotype O:3 (strain YPIII).